We begin with the raw amino-acid sequence, 394 residues long: Elongation factor Tu (394 aa).

The region spanning 10 to 204 (KPHVNVGTIG…ALDNYIPEPE (195 aa)) is the tr-type G domain. A G1 region spans residues 19–26 (GHVDHGKT). A GTP-binding site is contributed by 19 to 26 (GHVDHGKT). T26 is a binding site for Mg(2+). Positions 60–64 (GITIS) are G2. The tract at residues 81 to 84 (DCPG) is G3. Residues 81–85 (DCPGH) and 136–139 (NKCD) each bind GTP. Residues 136–139 (NKCD) are G4. The G5 stretch occupies residues 174 to 176 (SAL).

The protein belongs to the TRAFAC class translation factor GTPase superfamily. Classic translation factor GTPase family. EF-Tu/EF-1A subfamily. Monomer.

Its subcellular location is the cytoplasm. The catalysed reaction is GTP + H2O = GDP + phosphate + H(+). In terms of biological role, GTP hydrolase that promotes the GTP-dependent binding of aminoacyl-tRNA to the A-site of ribosomes during protein biosynthesis. The polypeptide is Elongation factor Tu (Idiomarina loihiensis (strain ATCC BAA-735 / DSM 15497 / L2-TR)).